The sequence spans 1020 residues: Sodium/potassium-transporting ATPase subunit alpha-2 (1020 aa).

Positions 1–5 (MGRGA) are excised as a propeptide. The tract at residues 1 to 31 (MGRGAGREYSPAATTAENGGGKKKQKEKELD) is disordered. The Cytoplasmic segment spans residues 6-85 (GREYSPAATT…NALTPPPTTP (80 aa)). At Ser-10 the chain carries Phosphoserine. Positions 80 to 82 (PPP) are interaction with phosphoinositide-3 kinase. Residues 86 to 106 (EWVKFCRQLFGGFSILLWIGA) form a helical membrane-spanning segment. Topologically, residues 107–129 (ILCFLAFGIQAAMEDEPSNDNLY) are extracellular. Residues 130–150 (LGVVLAAVVIVTGCFSYYQEA) traverse the membrane as a helical segment. At 151-286 (KSSKIMDSFK…VGRTPIAMEI (136 aa)) the chain is on the cytoplasmic side. Residues 212–227 (DNSSLTGESEPQTRSP) show a composition bias toward polar residues. The interval 212–231 (DNSSLTGESEPQTRSPEFTH) is disordered. The chain crosses the membrane as a helical span at residues 287 to 306 (EHFIQLITGVAVFLGVSFFV). Residues 307-318 (LSLILGYSWLEA) lie on the Extracellular side of the membrane. The helical transmembrane segment at 319 to 336 (VIFLIGIIVANVPEGLLA) threads the bilayer. Over 337 to 769 (TVTVCLTLTA…EEGRLIFDNL (433 aa)) the chain is Cytoplasmic. Asp-374 serves as the catalytic 4-aspartylphosphate intermediate. A phosphoserine mark is found at Ser-439, Ser-450, Ser-496, and Ser-559. The residue at position 570 (Thr-570) is a Phosphothreonine. Phosphoserine is present on residues Ser-587 and Ser-672. The Mg(2+) site is built by Asp-714 and Asp-718. A helical membrane pass occupies residues 770 to 789 (KKSIAYTLTSNIPEITPFLL). Residues 790–799 (FIIANIPLPL) lie on the Extracellular side of the membrane. The helical transmembrane segment at 800-820 (GTVTILCIDLGTDMVPAISLA) threads the bilayer. The Cytoplasmic portion of the chain corresponds to 821–840 (YEAAESDIMKRQPRNPQTDK). Ser-826 carries the post-translational modification Phosphoserine. The helical transmembrane segment at 841–863 (LVNERLISMAYGQIGMIQALGGF) threads the bilayer. The Extracellular segment spans residues 864-915 (FTYFVILAENGFLPSRLLGIRLDWDDRSMNDLEDSYGQEWTYEQRKVVEFTC). The chain crosses the membrane as a helical span at residues 916–935 (HTAFFASIVVVQWADLIICK). At 936 to 948 (TRRNSVFQQGMKN) the chain is on the cytoplasmic side. Ser-940 is subject to Phosphoserine; by PKA. The helical transmembrane segment at 949-967 (KILIFGLLEETALAAFLSY) threads the bilayer. Residues 968-982 (CPGMGVALRMYPLKV) are Extracellular-facing. The chain crosses the membrane as a helical span at residues 983 to 1003 (TWWFCAFPYSLLIFIYDEVRK). The Cytoplasmic portion of the chain corresponds to 1004-1020 (LILRRYPGGWVEKETYY).

This sequence belongs to the cation transport ATPase (P-type) (TC 3.A.3) family. Type IIC subfamily. In terms of assembly, the sodium/potassium-transporting ATPase is composed of a catalytic alpha subunit, an auxiliary non-catalytic beta subunit and an additional regulatory subunit. Interacts with regulatory subunit FXYD1.

It is found in the membrane. It localises to the cell membrane. The enzyme catalyses K(+)(out) + Na(+)(in) + ATP + H2O = K(+)(in) + Na(+)(out) + ADP + phosphate + H(+). In terms of biological role, this is the catalytic component of the active enzyme, which catalyzes the hydrolysis of ATP coupled with the exchange of sodium and potassium ions across the plasma membrane. This action creates the electrochemical gradient of sodium and potassium, providing the energy for active transport of various nutrients. The polypeptide is Sodium/potassium-transporting ATPase subunit alpha-2 (ATP1A2) (Bos taurus (Bovine)).